The following is a 366-amino-acid chain: Class I histocompatibility antigen, Gogo-C*0203 alpha chain (366 aa).

The N-terminal stretch at 1–24 (MRVMAPRTLILLLSGALALTETWA) is a signal peptide. Residues 25 to 114 (GSHSMRYFYT…LRGYYNQSED (90 aa)) are alpha-1. Over 25-308 (GSHSMRYFYT…EPSSQPTIPI (284 aa)) the chain is Extracellular. Residue Asn110 is glycosylated (N-linked (GlcNAc...) asparagine). The interval 115-206 (GSHTLQSMYG…ENGKETLQRA (92 aa)) is alpha-2. Disulfide bonds link Cys125/Cys188 and Cys227/Cys283. The tract at residues 207–298 (EPPKTHVTHH…GLPEPLTLRW (92 aa)) is alpha-3. An Ig-like C1-type domain is found at 209-297 (PKTHVTHHPL…EGLPEPLTLR (89 aa)). Positions 299–308 (EPSSQPTIPI) are connecting peptide. The chain crosses the membrane as a helical span at residues 309 to 332 (VGIVVGLAVLVVLAVLGAVVTAMM). Residues 333–366 (CRRKSSGGKGGSCSQAACSNSAQGSDESLITCKA) are Cytoplasmic-facing.

This sequence belongs to the MHC class I family. Heterodimer of an alpha chain and a beta chain (beta-2-microglobulin).

It localises to the membrane. Involved in the presentation of foreign antigens to the immune system. The protein is Class I histocompatibility antigen, Gogo-C*0203 alpha chain of Gorilla gorilla gorilla (Western lowland gorilla).